Consider the following 173-residue polypeptide: Lectin BRA-2 (173 aa).

N39 is a glycosylation site (N-linked (GlcNAc...) asparagine). Intrachain disulfides connect C47-C61, C78-C168, and C144-C160. Residues P51–I170 enclose the C-type lectin domain.

In terms of assembly, homohexamer; disulfide-linked. Coelemic fluid.

Functionally, sugar-binding protein which recognizes specific carbohydrate structures and agglutinates a variety of animal cells by binding to cell-surface glycoproteins and glycolipids. Calcium-dependent lectin. Invertebrate lectins may be involved in defense functions. The polypeptide is Lectin BRA-2 (Megabalanus rosa (Acorn barnacle)).